The primary structure comprises 35 residues: Mu-theraphotoxin-Pm1a (35 aa).

Intrachain disulfides connect cysteine 3-cysteine 17, cysteine 10-cysteine 22, and cysteine 16-cysteine 29. The residue at position 35 (phenylalanine 35) is a Phenylalanine amide.

Belongs to the neurotoxin 10 (Hwtx-1) family. 62 (Vatx) subfamily. In terms of tissue distribution, expressed by the venom gland.

Its subcellular location is the secreted. Functionally, gating-modifier toxin with weak activity on Nav1.7/SCN9A and Nav1.8/SCN10A. Inhibits Nav1.7/SCN9A peak current (IC(50)=334 nM) and shifts the voltage dependence of activation to more depolarised membrane potentials. Shows 21% peak current inhibition (at 10 uM) on Nav1.8/SCN10A sodium channels. The chain is Mu-theraphotoxin-Pm1a from Poecilotheria metallica (Metallic blue ornamental tree spider).